A 351-amino-acid polypeptide reads, in one-letter code: LIM/homeobox protein ceh-14 (351 aa).

2 consecutive LIM zinc-binding domains span residues 46–105 (AICS…KFGT) and 105–169 (TKCS…ARDK). The homeobox DNA-binding region spans 180–239 (NKRPRTTISAKSLETLKQAYQTSSKPARHVREQLASETGLDMRVVQVWFQNRRAKEKRLK). Over residues 238–254 (LKKDAGRRWKSSNRAES) the composition is skewed to basic and acidic residues. The interval 238–268 (LKKDAGRRWKSSNRAESDSNSPIESINGQSP) is disordered. The segment covering 255–268 (DSNSPIESINGQSP) has biased composition (polar residues).

In terms of assembly, interacts (via LIM zinc-binding domains 1 and 2) with lim-7 (via LID domain). May interact with itself. May interact with homeobox protein ceh-63. Expressed in the anterior AFDL/R sensory neurons and BDUL/R and ALA interneurons, and in PVT, PVQL/R, DVC, PVNL/R, PVWL/R, PVR, PHCL/R, PHAL/R and PHBL/R cells in the tail region.

The protein localises to the nucleus. In terms of biological role, probable transcription factor, modulating expression of helix-loop-helix protein mbr-1 and homeobox protein ceh-63, perhaps acting in concert with ceh-63. Binds to a motif including the sequence 5'-CTAAT-3' in regulatory promoter elements. Confers thermosensory function to neurons. Required for correct AFD-mediated thermotaxis. In concert with homeobox protein ttx-1, perhaps as components in a complex, specifies identity of AFD neurons, acting by synergistically regulating receptor-type guanylyl cyclase gcy-8, gcy-18 and other genes. Involved in postembryonic differentiation of the ALA neuron, and regulation of genes that contribute to behavioral quiescence, a sleep-like behavior mediated by ALA. Regulates its own expression and also that of homeodomain ceh-17, together forming an autoregulatory loop in the ALA neuron. Required for initial pathfinding of the ALA axons, but largely dispensable for axon migration. Involved in regulating postembryonic axon maintenance in the ventral nerve cord, acting in concert with LIM homeobox protein lim-6, via modulation of expression of immunoglobulin domain zig genes in the interneuron PVT. Plays a role in controlling the peptidergic identity of the BDU neurons, regulating expression of flp-10, nlp-1, and nlp-15, thereby modulating the harsh touch response. The chain is LIM/homeobox protein ceh-14 (ceh-14) from Caenorhabditis elegans.